Here is a 201-residue protein sequence, read N- to C-terminus: ATP-dependent Clp protease proteolytic subunit (201 aa).

The active-site Nucleophile is Ser103. His128 is a catalytic residue.

This sequence belongs to the peptidase S14 family. Fourteen ClpP subunits assemble into 2 heptameric rings which stack back to back to give a disk-like structure with a central cavity, resembling the structure of eukaryotic proteasomes.

Its subcellular location is the cytoplasm. It catalyses the reaction Hydrolysis of proteins to small peptides in the presence of ATP and magnesium. alpha-casein is the usual test substrate. In the absence of ATP, only oligopeptides shorter than five residues are hydrolyzed (such as succinyl-Leu-Tyr-|-NHMec, and Leu-Tyr-Leu-|-Tyr-Trp, in which cleavage of the -Tyr-|-Leu- and -Tyr-|-Trp bonds also occurs).. Functionally, cleaves peptides in various proteins in a process that requires ATP hydrolysis. Has a chymotrypsin-like activity. Plays a major role in the degradation of misfolded proteins. The chain is ATP-dependent Clp protease proteolytic subunit from Bordetella avium (strain 197N).